The chain runs to 960 residues: MTETGSYKDTVNLPKTNFDMRANAIKREPEIQKFWEENKIFESLSQNNPGELFILHDGPPYANGSLHIGHALNKILKDIINRYQLLQGRKVRYVPGWDCHGLPIELKVLQNLKSAERQNLTPLQLRQKAKEFALATVDNQRQNFKRYGVWGDWDNPYLTLKPEYEAAQIGVFGQMVLKGYIYRGLKPVHWSPSSKTALAEAELEYPEGHTSRSIYAAFPVTSFAEAAKPLLGEYLPDLGVAIWTTTPWTIPGNLAVAVNGDLNYSLVEVSRIGAETQSNFKYLIVAADLVERLAATISAQLTVKATFKGKELEHTTYRHPLFDRESPVVVGGDYITTESGTGLVHTAPGHGQEDYVVGLRYGLPILAPVDDNGDFTQEAGQFAGLNVLGEGNQAVIDALTAAGSLLKEEAYAHKYPYDWRTKKPTIFRATEQWFASVEGFRDEALKAIAAVKWIPAQGENRITPMVAERSDWCISRQRSWGVPIPVFYDEETGEPLLNEETINYVQAIIAEKGSDAWWELSVAELLPESYRNNGRSYRRGTDTMDVWFDSGSSWASVVKQRPELRYPADMYLEGSDQHRGWFQSSLLTSVSVNGIAPYKTVLTHGFVLDEQGRKMSKSEGNVVDPAIIINGGKDQKKEPPYGADVMRLWASSVDYTGDVRLGGNIIKQLNDVRGKIRNTARFLLGSLYDFDPEKNAVQFEEMPQLDKYMLHRIREVFEEVTEAFESFQFFRFFQTVQNFCVVDLSNFYLDVAKDRLYISAPDAFRRRSCQTVIHIALENLARAIAPVLCHTAEDIWQYLPYKTPYKSVFEAGWVQVEEKWHNPELAEFWQQLRQLRTDVNKVLEQARVEKMIGSSLEAKALIYVKDANSRKAIATLNPEVGNGVDELRYLFLTSQVELLDSADKLQDGKYTSQSDSWGIGVVNAEGQKCDRCWNYSTHVGESAEHPLLCERCVPALAGEF.

The short motif at 60–70 is the 'HIGH' region element; the sequence is PYANGSLHIGH. Glu573 provides a ligand contact to L-isoleucyl-5'-AMP. A 'KMSKS' region motif is present at residues 614-618; it reads KMSKS. Position 617 (Lys617) interacts with ATP. Zn(2+) contacts are provided by Cys929, Cys932, Cys949, and Cys952.

Belongs to the class-I aminoacyl-tRNA synthetase family. IleS type 1 subfamily. In terms of assembly, monomer. Zn(2+) is required as a cofactor.

It localises to the cytoplasm. It catalyses the reaction tRNA(Ile) + L-isoleucine + ATP = L-isoleucyl-tRNA(Ile) + AMP + diphosphate. Catalyzes the attachment of isoleucine to tRNA(Ile). As IleRS can inadvertently accommodate and process structurally similar amino acids such as valine, to avoid such errors it has two additional distinct tRNA(Ile)-dependent editing activities. One activity is designated as 'pretransfer' editing and involves the hydrolysis of activated Val-AMP. The other activity is designated 'posttransfer' editing and involves deacylation of mischarged Val-tRNA(Ile). The polypeptide is Isoleucine--tRNA ligase (Nostoc sp. (strain PCC 7120 / SAG 25.82 / UTEX 2576)).